The sequence spans 257 residues: MDVIPAIDLLEGRCVRLYQGDYDRSQVFSENPVDVAKQWVDQGANRLHIVDLDGAKAGKVVNLGAIEAIAHAVSVPIEIGGGLRDRTSVQQLFNLGIQWAILGTIAVEQPQLVQELCAEFPGQIIIGIDARNGRVATRGWLETSEVLATQLAVQMQELGAAAIIYTDIHRDGTLIGPNLEALRELAAVISIPIIASGGVSSLTDLLSLLALEPQGVTGVIVGRALYTGDILLKEALRAIGPGRIQDIPPNLGFSSFA.

Asp-8 acts as the Proton acceptor in catalysis. The active-site Proton donor is the Asp-129.

This sequence belongs to the HisA/HisF family.

It localises to the cytoplasm. It carries out the reaction 1-(5-phospho-beta-D-ribosyl)-5-[(5-phospho-beta-D-ribosylamino)methylideneamino]imidazole-4-carboxamide = 5-[(5-phospho-1-deoxy-D-ribulos-1-ylimino)methylamino]-1-(5-phospho-beta-D-ribosyl)imidazole-4-carboxamide. Its pathway is amino-acid biosynthesis; L-histidine biosynthesis; L-histidine from 5-phospho-alpha-D-ribose 1-diphosphate: step 4/9. This Nostoc punctiforme (strain ATCC 29133 / PCC 73102) protein is 1-(5-phosphoribosyl)-5-[(5-phosphoribosylamino)methylideneamino] imidazole-4-carboxamide isomerase.